The following is a 265-amino-acid chain: Translation initiation factor 2 subunit alpha (265 aa).

One can recognise an S1 motif domain in the interval 12–82 (GELVIGTVKK…KMRVVEVSLK (71 aa)).

The protein belongs to the eIF-2-alpha family. As to quaternary structure, heterotrimer composed of an alpha, a beta and a gamma chain.

Its function is as follows. eIF-2 functions in the early steps of protein synthesis by forming a ternary complex with GTP and initiator tRNA. The protein is Translation initiation factor 2 subunit alpha of Pyrobaculum aerophilum (strain ATCC 51768 / DSM 7523 / JCM 9630 / CIP 104966 / NBRC 100827 / IM2).